The following is a 481-amino-acid chain: Proline--tRNA ligase (481 aa).

The protein belongs to the class-II aminoacyl-tRNA synthetase family. ProS type 3 subfamily. Homodimer.

The protein localises to the cytoplasm. The enzyme catalyses tRNA(Pro) + L-proline + ATP = L-prolyl-tRNA(Pro) + AMP + diphosphate. Catalyzes the attachment of proline to tRNA(Pro) in a two-step reaction: proline is first activated by ATP to form Pro-AMP and then transferred to the acceptor end of tRNA(Pro). This Chlorobium phaeobacteroides (strain DSM 266 / SMG 266 / 2430) protein is Proline--tRNA ligase.